The sequence spans 706 residues: Parasporal crystal protein Cry18Aa (706 aa).

Belongs to the delta endotoxin family.

In terms of biological role, binds to the brush border membrane vesicles of scarab larvae and somehow damages the gut wall to allow the vegetative cells of P.popilliae to enter the hemolymph. Active on M.melolontha. In Paenibacillus popilliae (Bacillus popilliae), this protein is Parasporal crystal protein Cry18Aa (cry18Aa).